Reading from the N-terminus, the 276-residue chain is Putative pyruvate, phosphate dikinase regulatory protein (276 aa).

154–161 (GVSRTSKS) contacts ADP.

This sequence belongs to the pyruvate, phosphate/water dikinase regulatory protein family. PDRP subfamily.

The enzyme catalyses N(tele)-phospho-L-histidyl/L-threonyl-[pyruvate, phosphate dikinase] + ADP = N(tele)-phospho-L-histidyl/O-phospho-L-threonyl-[pyruvate, phosphate dikinase] + AMP + H(+). It catalyses the reaction N(tele)-phospho-L-histidyl/O-phospho-L-threonyl-[pyruvate, phosphate dikinase] + phosphate + H(+) = N(tele)-phospho-L-histidyl/L-threonyl-[pyruvate, phosphate dikinase] + diphosphate. Bifunctional serine/threonine kinase and phosphorylase involved in the regulation of the pyruvate, phosphate dikinase (PPDK) by catalyzing its phosphorylation/dephosphorylation. In Wolbachia pipientis wMel, this protein is Putative pyruvate, phosphate dikinase regulatory protein.